The primary structure comprises 317 residues: Nuclear distribution protein nudE homolog (317 aa).

Residues 29 to 180 (TDVKQEYDEF…LKQELNVKSR (152 aa)) adopt a coiled-coil conformation. A disordered region spans residues 186–205 (NGTSVPTANDTNTVNSSMNS).

This sequence belongs to the nudE family.

The protein localises to the cytoplasm. Its subcellular location is the cytoskeleton. It is found in the microtubule organizing center. The protein resides in the centrosome. It localises to the spindle. Its function is as follows. Chaperone protein with functions in nuclear localization. Required for centrosome duplication and formation and function of the mitotic spindle. In postmitotic neurons, acts with nudC downstream of dar1 to ensure correct positioning of the nuclei in primary dendrites and as a consequence, is required for determining multipolar neuron morphology. In Drosophila melanogaster (Fruit fly), this protein is Nuclear distribution protein nudE homolog.